The following is a 1017-amino-acid chain: uncharacterized protein (1017 aa).

Positions 1-34 (MGNLTMSRRTFVKTAAITGAAAAAFGASTHTALA) form a signal peptide, tat-type signal. Residues 45 to 103 (DTVAVKTCCRGCGKMECGVKVIVQNGRAIRVEGDEGAFQSMGNCCTKSQSSIQAAYHPD) form the 4Fe-4S Mo/W bis-MGD-type domain. [4Fe-4S] cluster is bound by residues Cys53, Cys56, Cys61, and Cys89. Lys91 functions as the Electron donor/acceptor in the catalytic mechanism.

This sequence belongs to the prokaryotic molybdopterin-containing oxidoreductase family. Requires [4Fe-4S] cluster as cofactor. It depends on Mo-bis(molybdopterin guanine dinucleotide) as a cofactor. Predicted to be exported by the Tat system. The position of the signal peptide cleavage has not been experimentally proven.

This is an uncharacterized protein from Eggerthella lenta (strain ATCC 25559 / DSM 2243 / CCUG 17323 / JCM 9979 / KCTC 3265 / NCTC 11813 / VPI 0255 / 1899 B) (Eubacterium lentum).